A 264-amino-acid polypeptide reads, in one-letter code: Merozoite surface protein 2 (264 aa).

An N-terminal signal peptide occupies residues 1 to 20 (MKVIKTLSIINFFIFVTFNI). N-linked (GlcNAc...) asparagine glycosylation is found at Asn-22 and Asn-36. Positions 44–190 (ANEGSNTNSV…PQTAENENPA (147 aa)) are polymorphic region. Residues 46-227 (EGSNTNSVGA…QKECTDGNKE (182 aa)) are disordered. Repeat copies occupy residues 60–91 (ADTI…TPTA) and 92–123 (ADTI…TPTA). Residues 60–123 (ADTIASGSQR…GESQTTTPTA (64 aa)) are 2 X 32 AA perfects repeats. A compositionally biased stretch (low complexity) spans 70-81 (STNSASTSTTNN). A compositionally biased stretch (polar residues) spans 82–101 (GESQTTTPTAADTIASGSQR). Residues 102–145 (STNSASTSTTNNGESQTTTPTAADTPTATESISPSPPITTTESS) show a composition bias toward low complexity. The span at 154–166 (TDGKGEESEKQNE) shows a compositional bias: basic and acidic residues. A glycan (N-linked (GlcNAc...) asparagine) is linked at Asn-213. The segment covering 217 to 226 (SQKECTDGNK) has biased composition (basic and acidic residues). Residues Cys-221 and Cys-229 are joined by a disulfide bond. N-linked (GlcNAc...) asparagine glycosylation occurs at Asn-238. Asn-238 is lipidated: GPI-anchor amidated asparagine. Residues 239 to 264 (SSNIASINKFVVLISATLVLSFAIFI) constitute a propeptide, removed in mature form.

It localises to the cell membrane. Functionally, may play a role in the merozoite attachment to the erythrocyte. This is Merozoite surface protein 2 from Plasmodium falciparum (isolate FC27 / Papua New Guinea).